A 391-amino-acid chain; its full sequence is Phosphoglycerate kinase (391 aa).

Substrate is bound by residues 21–23 (DLN), R36, 59–62 (HLGR), R113, and R146. ATP-binding positions include K197, E319, and 345–348 (GGDT).

The protein belongs to the phosphoglycerate kinase family. As to quaternary structure, monomer.

It localises to the cytoplasm. The enzyme catalyses (2R)-3-phosphoglycerate + ATP = (2R)-3-phospho-glyceroyl phosphate + ADP. It participates in carbohydrate degradation; glycolysis; pyruvate from D-glyceraldehyde 3-phosphate: step 2/5. This is Phosphoglycerate kinase from Shewanella sp. (strain W3-18-1).